Reading from the N-terminus, the 165-residue chain is ATP synthase subunit delta, mitochondrial (165 aa).

The N-terminal 27 residues, 1 to 27 (MNSLRIARAALRVRPTAVRAPLQRRGY), are a transit peptide targeting the mitochondrion.

The protein belongs to the ATPase epsilon chain family. As to quaternary structure, F-type ATPases have 2 components, CF(1) - the catalytic core - and CF(0) - the membrane proton channel. CF(1) has five subunits: alpha(3), beta(3), gamma(1), delta(1), epsilon(1). CF(0) has three main subunits: a, b and c.

The protein localises to the mitochondrion. It localises to the mitochondrion inner membrane. Its function is as follows. Mitochondrial membrane ATP synthase (F(1)F(0) ATP synthase or Complex V) produces ATP from ADP in the presence of a proton gradient across the membrane which is generated by electron transport complexes of the respiratory chain. F-type ATPases consist of two structural domains, F(1) - containing the extramembraneous catalytic core, and F(0) - containing the membrane proton channel, linked together by a central stalk and a peripheral stalk. During catalysis, ATP turnover in the catalytic domain of F(1) is coupled via a rotary mechanism of the central stalk subunits to proton translocation. Part of the complex F(1) domain and of the central stalk which is part of the complex rotary element. Rotation of the central stalk against the surrounding alpha(3)beta(3) subunits leads to hydrolysis of ATP in three separate catalytic sites on the beta subunits. This is ATP synthase subunit delta, mitochondrial (des) from Neurospora crassa (strain ATCC 24698 / 74-OR23-1A / CBS 708.71 / DSM 1257 / FGSC 987).